A 289-amino-acid chain; its full sequence is Segregation and condensation protein A (289 aa).

Positions 1 to 18 (MSEDRRSPTDEAPREGEL) are enriched in basic and acidic residues. Positions 1–24 (MSEDRRSPTDEAPREGELPRSPGD) are disordered.

The protein belongs to the ScpA family. In terms of assembly, component of the Structural Maintenance of Chromosome (SMC) condensin-like complex composed of ScpA, ScpB and the Smc homodimer. ScpA and ScpB bind to the head domain of Smc. The presence of the three proteins is required for the association of the complex with DNA.

Its subcellular location is the cytoplasm. A conditionally essential component of the chromosome segregation machinery. Participates in chromosomal partition during cell division. Important for positioning of ParB-parS complexes (ori of replication) and of the ter replication site, as well as for segration of the ParB-parS complex and thus chromosome segregation. May act via the formation of a condensin-like complex containing Smc, ScpA and ScpB that pulls DNA away from mid-cell into both cell halves. This chain is Segregation and condensation protein A, found in Myxococcus xanthus (strain DK1622).